The chain runs to 706 residues: Elongation factor G (706 aa).

Residues 8-297 form the tr-type G domain; the sequence is SYVRNIGIGA…AVVDYLPSPN (290 aa). GTP contacts are provided by residues 17–24, 95–99, and 149–152; these read AHIDAGKT, DTPGH, and NKMD.

Belongs to the TRAFAC class translation factor GTPase superfamily. Classic translation factor GTPase family. EF-G/EF-2 subfamily.

It localises to the cytoplasm. Functionally, catalyzes the GTP-dependent ribosomal translocation step during translation elongation. During this step, the ribosome changes from the pre-translocational (PRE) to the post-translocational (POST) state as the newly formed A-site-bound peptidyl-tRNA and P-site-bound deacylated tRNA move to the P and E sites, respectively. Catalyzes the coordinated movement of the two tRNA molecules, the mRNA and conformational changes in the ribosome. The polypeptide is Elongation factor G (Orientia tsutsugamushi (strain Boryong) (Rickettsia tsutsugamushi)).